The sequence spans 215 residues: MGRRPARCYRQPKGKPYPKSRYNRGVPDARIRIYDSGRKKATVEEFPYVVHIVSDEKEQITSEALEAARIAANKNLIKFISKDAFHLRCRVHPWHVLRINKMLSCAGADRLQSGMRGAFGKALGKAARVDIGSILFSVRVKEPHVKYAIDALTRAKAKFPGRQKVVTSQKWGFTKLTRAQYSRLRNQKKLVTDGSNVKVIGERGPLSRLELFRKI.

The tract at residues 1–22 (MGRRPARCYRQPKGKPYPKSRY) is disordered.

The protein belongs to the universal ribosomal protein uL16 family.

This chain is Large ribosomal subunit protein uL16 (RPL10), found in Tetrahymena thermophila (strain SB210).